A 386-amino-acid polypeptide reads, in one-letter code: Cell division protein FtsZ (386 aa).

GTP contacts are provided by residues 20–24 (GGGGN), 107–109 (GTG), Glu138, Arg142, and Asn186. Positions 350-377 (LNQEQKTAAKAVNEQNAQGSKEPDYLDI) are disordered.

The protein belongs to the FtsZ family. In terms of assembly, homodimer. Polymerizes to form a dynamic ring structure in a strictly GTP-dependent manner. Interacts directly with several other division proteins.

The protein resides in the cytoplasm. In terms of biological role, essential cell division protein that forms a contractile ring structure (Z ring) at the future cell division site. The regulation of the ring assembly controls the timing and the location of cell division. One of the functions of the FtsZ ring is to recruit other cell division proteins to the septum to produce a new cell wall between the dividing cells. Binds GTP and shows GTPase activity. This chain is Cell division protein FtsZ, found in Sodalis glossinidius.